A 204-amino-acid chain; its full sequence is UPF0637 protein SAS1041 (204 aa).

It belongs to the UPF0637 family.

In Staphylococcus aureus (strain MSSA476), this protein is UPF0637 protein SAS1041.